A 476-amino-acid chain; its full sequence is Glycogen synthase (476 aa).

An ADP-alpha-D-glucose-binding site is contributed by Lys-15.

The protein belongs to the glycosyltransferase 1 family. Bacterial/plant glycogen synthase subfamily.

The catalysed reaction is [(1-&gt;4)-alpha-D-glucosyl](n) + ADP-alpha-D-glucose = [(1-&gt;4)-alpha-D-glucosyl](n+1) + ADP + H(+). It participates in glycan biosynthesis; glycogen biosynthesis. Synthesizes alpha-1,4-glucan chains using ADP-glucose. This is Glycogen synthase from Yersinia pseudotuberculosis serotype IB (strain PB1/+).